Reading from the N-terminus, the 448-residue chain is Multiple inositol polyphosphate phosphatase 1 (448 aa).

Positions 1–19 are cleaved as a signal peptide; sequence MAPRRAACLLPLLVAVASA. H69 is a catalytic residue. 4 N-linked (GlcNAc...) asparagine glycosylation sites follow: N203, N257, N409, and N441. A Prevents secretion from ER motif is present at residues 445-448; it reads ADEL.

This sequence belongs to the histidine acid phosphatase family. MINPP1 subfamily. Post-translationally, N-glycosylated. Present in growth plate chondrocytes but not detectable in articular chondrocytes (at protein level). Spatially restricted to chondrocytes in the lower portion of the proliferative zone and the upper portion of the hypertrophic zone in the growth plate of long bones (at protein level). Weakly expressed in kidney, liver, lung, skin and spleen, and not detected in brain, heart and muscle.

It is found in the endoplasmic reticulum lumen. It localises to the secreted. The protein localises to the cell membrane. It catalyses the reaction 1D-myo-inositol hexakisphosphate + H2O = 1D-myo-inositol 1,2,4,5,6-pentakisphosphate + phosphate. The enzyme catalyses 1D-myo-inositol 1,2,4,5,6-pentakisphosphate + H2O = 1D-myo-inositol 1,2,5,6-tetrakisphosphate + phosphate. The catalysed reaction is 1D-myo-inositol 1,2,5,6-tetrakisphosphate + H2O = 1D-myo-inositol 1,2,6-trisphosphate + phosphate. It carries out the reaction 1D-myo-inositol 1,2,6-trisphosphate + H2O = 1D-myo-inositol 1,2-bisphosphate + phosphate. It catalyses the reaction 1D-myo-inositol 1,2-bisphosphate + H2O = 1D-myo-inositol 2-phosphate + phosphate. The enzyme catalyses 1D-myo-inositol hexakisphosphate + H2O = 1D-myo-inositol 1,2,3,5,6-pentakisphosphate + phosphate. The catalysed reaction is 1D-myo-inositol 1,2,3,5,6-pentakisphosphate + H2O = 1D-myo-inositol 1,2,3,6-tetrakisphosphate + phosphate. It carries out the reaction 1D-myo-inositol 1,2,3,6-tetrakisphosphate + H2O = 1D-myo-inositol 1,2,3-trisphosphate + phosphate. It catalyses the reaction 1D-myo-inositol 1,2,3-trisphosphate + H2O = 1D-myo-inositol 2,3-bisphosphate + phosphate. The enzyme catalyses 1D-myo-inositol 2,3-bisphosphate + H2O = 1D-myo-inositol 2-phosphate + phosphate. The catalysed reaction is 1D-myo-inositol 1,3,4,5,6-pentakisphosphate + H2O = 1D-myo-inositol 1,4,5,6-tetrakisphosphate + phosphate. It carries out the reaction 1D-myo-inositol 1,4,5,6-tetrakisphosphate + H2O = 1D-myo-inositol 1,4,5-trisphosphate + phosphate. It catalyses the reaction (2R)-2,3-bisphosphoglycerate + H2O = (2R)-2-phosphoglycerate + phosphate. Its function is as follows. Multiple inositol polyphosphate phosphatase that hydrolyzes 1D-myo-inositol 1,3,4,5,6-pentakisphosphate (InsP5[2OH]) and 1D-myo-inositol hexakisphosphate (InsP6) to a range of less phosphorylated inositol phosphates. This regulates the availability of these various small molecule second messengers and metal chelators which control many aspects of cell physiology. Has a weak in vitro activity towards 1D-myo-inositol 1,4,5-trisphosphate which is unlikely to be physiologically relevant. By regulating intracellular inositol polyphosphates pools, which act as metal chelators, it may control the availability of intracellular calcium and iron, which are important for proper neuronal development and homeostasis. May have a dual substrate specificity, and function as a 2,3-bisphosphoglycerate 3-phosphatase hydrolyzing 2,3-bisphosphoglycerate to 2-phosphoglycerate. 2,3-bisphosphoglycerate (BPG) is formed as part of the Rapoport-Luebering glycolytic bypass and is a regulator of systemic oxygen homeostasis as the major allosteric effector of hemoglobin. The protein is Multiple inositol polyphosphate phosphatase 1 (MINPP1) of Gallus gallus (Chicken).